Reading from the N-terminus, the 156-residue chain is Ribosomal RNA large subunit methyltransferase H (156 aa).

S-adenosyl-L-methionine-binding positions include L73, G104, and 123-128 (IGPLTL).

Belongs to the RNA methyltransferase RlmH family. As to quaternary structure, homodimer.

It is found in the cytoplasm. The catalysed reaction is pseudouridine(1915) in 23S rRNA + S-adenosyl-L-methionine = N(3)-methylpseudouridine(1915) in 23S rRNA + S-adenosyl-L-homocysteine + H(+). Its function is as follows. Specifically methylates the pseudouridine at position 1915 (m3Psi1915) in 23S rRNA. The protein is Ribosomal RNA large subunit methyltransferase H of Xanthomonas euvesicatoria pv. vesicatoria (strain 85-10) (Xanthomonas campestris pv. vesicatoria).